The chain runs to 230 residues: Large ribosomal subunit protein uL1 (230 aa).

It belongs to the universal ribosomal protein uL1 family. As to quaternary structure, part of the 50S ribosomal subunit.

In terms of biological role, binds directly to 23S rRNA. The L1 stalk is quite mobile in the ribosome, and is involved in E site tRNA release. Its function is as follows. Protein L1 is also a translational repressor protein, it controls the translation of the L11 operon by binding to its mRNA. In Staphylococcus aureus (strain Mu3 / ATCC 700698), this protein is Large ribosomal subunit protein uL1.